Reading from the N-terminus, the 217-residue chain is ATP-binding protein BexA (217 aa).

Positions 2 to 217 (IRVNNVCKKY…AYQYYNETQK (216 aa)) constitute an ABC transporter domain. An ATP-binding site is contributed by 38–45 (GRNGAGKS).

It belongs to the ABC transporter superfamily.

It localises to the cell inner membrane. In terms of biological role, putative ATP-binding protein, and an energy-coupling component of capsule polysaccharide export apparatus. The chain is ATP-binding protein BexA (bexA) from Haemophilus influenzae.